Here is a 335-residue protein sequence, read N- to C-terminus: Mycobacterial beta-ketoacyl-[acyl-carrier-protein] synthase III (335 aa).

Catalysis depends on residues cysteine 122 and histidine 258. An ACP-binding region spans residues 259 to 263 (QANSR). Asparagine 289 is a catalytic residue.

It belongs to the thiolase-like superfamily. FabH family. Homodimer.

It localises to the cytoplasm. The catalysed reaction is malonyl-[ACP] + dodecanoyl-CoA + H(+) = 3-oxotetradecanoyl-[ACP] + CO2 + CoA. It participates in lipid metabolism; fatty acid biosynthesis. The protein operates within lipid metabolism; mycolic acid biosynthesis. Functionally, catalyzes the condensation reaction of fatty acid synthesis by the addition to an acyl acceptor of two carbons from malonyl-ACP. Catalyzes the first condensation reaction which initiates fatty acid synthesis and may therefore play a role in governing the total rate of fatty acid production. Possesses both acetoacetyl-ACP synthase and acetyl transacylase activities. Its substrate specificity determines the biosynthesis of branched-chain and/or straight-chain of fatty acids. The polypeptide is Mycobacterial beta-ketoacyl-[acyl-carrier-protein] synthase III (Mycobacterium ulcerans (strain Agy99)).